The following is a 122-amino-acid chain: Large ribosomal subunit protein uL14c (122 aa).

The protein belongs to the universal ribosomal protein uL14 family. Part of the 50S ribosomal subunit.

It localises to the plastid. Binds to 23S rRNA. The protein is Large ribosomal subunit protein uL14c (rpl14) of Helicosporidium sp. subsp. Simulium jonesii (Green alga).